Consider the following 338-residue polypeptide: Phosphate acyltransferase (338 aa).

The protein belongs to the PlsX family. As to quaternary structure, homodimer. Probably interacts with PlsY.

It is found in the cytoplasm. It carries out the reaction a fatty acyl-[ACP] + phosphate = an acyl phosphate + holo-[ACP]. It participates in lipid metabolism; phospholipid metabolism. In terms of biological role, catalyzes the reversible formation of acyl-phosphate (acyl-PO(4)) from acyl-[acyl-carrier-protein] (acyl-ACP). This enzyme utilizes acyl-ACP as fatty acyl donor, but not acyl-CoA. This Gloeobacter violaceus (strain ATCC 29082 / PCC 7421) protein is Phosphate acyltransferase.